Consider the following 313-residue polypeptide: uncharacterized protein (313 aa).

The N-acetyltransferase domain maps to 6–152 (YDILENPEPN…YHASMEKMTG (147 aa)).

Its function is as follows. To the C-terminal of C.elegans F21C10.9. This is an uncharacterized protein from Caenorhabditis elegans.